The sequence spans 568 residues: Peroxisomal leader peptide-processing protease (568 aa).

The segment at 332 to 568 is serine protease; it reads TPRGLPLRDL…PLSEVPRSKL (237 aa). Catalysis depends on charge relay system residues His-374, Asp-410, and Ser-483.

This sequence belongs to the peptidase S1B family. As to quaternary structure, homodimer. Forms a heterodimer with the C-terminal cleavage product (49 kDa form). Forms a heterodimer with the N-terminal cleavage product (10 kDa form). Interacts with PEX5. Interacts with LONP2. In terms of processing, self-cleavage gives rise to an N-terminal 10-kDa fragment and C-terminal 49-kDa fragment upon import into the peroxisomes. The full-lengh TYSND1 is the active the proteolytic processing of PTS1- and PTS2-proteins and in self-cleavage, and intermolecular self-cleavage of TYSND1 down-regulates its protease activity.

The protein localises to the peroxisome. Its activity is regulated as follows. Inhibited by N-ethylmaleimide (NEM). Not affected by leupeptin or trans-epoxysuccinyl-l-leucylamido-(4-gianidino) butane (E64). Peroxisomal protease that mediates both the removal of the leader peptide from proteins containing a PTS2 target sequence and processes several PTS1-containing proteins. Catalyzes the processing of PTS1-proteins involved in the peroxisomal beta-oxidation of fatty acids. This chain is Peroxisomal leader peptide-processing protease (Tysnd1), found in Mus musculus (Mouse).